The following is a 220-amino-acid chain: Large ribosomal subunit protein eL15 (220 aa).

Belongs to the eukaryotic ribosomal protein eL15 family.

In Staphylothermus marinus (strain ATCC 43588 / DSM 3639 / JCM 9404 / F1), this protein is Large ribosomal subunit protein eL15.